A 260-amino-acid chain; its full sequence is MDDYAVLSDTELAAVLRQYNIPHGPILGSTRKLYEKKIFEYETQRRRLSPPSSSSSSFSYRFSDLDSASVDSDMYDLPKKEDALLYQSKDYNDDYYEESYLTTRTYGEPESVGMSKSFRRPGTSLVDADDTFHHQVRDDIFSSSEEEGKDRERPIYGRDSAYQSIAEYRPISNVSRSSLGLSYYPRSSTSSVSSSSSSPSSWLTRRAIRPEKQAPTAALGQDRQVPLWGQLLLFLAFATFLLFVYYSIQAQEGNPFWMDP.

The residue at position 1 (Met1) is an N-acetylmethionine. The 45-residue stretch at 1–45 (MDDYAVLSDTELAAVLRQYNIPHGPILGSTRKLYEKKIFEYETQR) folds into the LEM domain. 2 positions are modified to phosphoserine: Ser8 and Ser29. Residues 46–224 (RRLSPPSSSS…PTAALGQDRQ (179 aa)) are interaction with F-actin. The residue at position 49 (Ser49) is a Phosphoserine; by PKA. 8 positions are modified to phosphoserine: Ser54, Ser69, Ser72, Ser88, Ser99, Ser142, Ser143, and Ser144. Position 162 is a phosphotyrosine (Tyr162). The segment at 169–188 (RPISNVSRSSLGLSYYPRSS) is interaction with CTNNB1. Ser172, Ser175, and Ser177 each carry phosphoserine. Residues 184-206 (YPRSSTSSVSSSSSSPSSWLTRR) are disordered. A compositionally biased stretch (low complexity) spans 187-201 (SSTSSVSSSSSSPSS). The helical transmembrane segment at 225-245 (VPLWGQLLLFLAFATFLLFVY) threads the bilayer.

Interacts with lamins A and C, BANF1, GMCL, BCLAF1 and YTHDC1/YT521. Interacts with TMEM43; the interaction retains emerin in the inner nuclear membrane. Interacts with ACTB, SPTAN1, F-actin, CTNNB1 and beta-tubulin. Interacts with SUN1 and SUN2. Interacts with TMEM201. Interacts with NEMP1.

It is found in the nucleus inner membrane. It localises to the nucleus outer membrane. Functionally, stabilizes and promotes the formation of a nuclear actin cortical network. Stimulates actin polymerization in vitro by binding and stabilizing the pointed end of growing filaments. Inhibits beta-catenin activity by preventing its accumulation in the nucleus. Acts by influencing the nuclear accumulation of beta-catenin through a CRM1-dependent export pathway. Links centrosomes to the nuclear envelope via a microtubule association. Required for proper localization of non-farnesylated prelamin-A/C. Together with NEMP1, contributes to nuclear envelope stiffness in germ cells. The polypeptide is Emerin (Emd) (Rattus norvegicus (Rat)).